We begin with the raw amino-acid sequence, 330 residues long: Clp protease adapter protein ClpF, chloroplastic (330 aa).

Residues 1-65 (MVQSQSLSTL…KSLKQRNLLR (65 aa)) constitute a chloroplast transit peptide. Residues 66–138 (VEARWPFQGG…VEEESIRLQE (73 aa)) are NTD, required for CLPS1-binding. 2 coiled-coil regions span residues 112-139 (NLEQ…LQEG) and 175-195 (AAKL…VSAK). A UVR domain is found at 153-188 (GISIIRLRADLQNAIDSEDYGLAAKLRDEISKLEAE). A yccV-like region spans residues 203–310 (EYAFRLGQKL…TAGDFIPVKQ (108 aa)).

Binds to CLPC1 and CLPC2. Interacts with ClpS1; this interaction stimulates their association with ClpC. Associates with the Clp substrate HEMA1 (GluTR). Expressed constitutively in photosynthetic tissues such as leaves, stems and flowers, and, at low levels, in siliques.

The protein localises to the plastid. It is found in the chloroplast. In terms of biological role, clp protease adapter that facilitates CLPS1 recruitment to ClpC chaperones thus forming a binary adapter for selective substrate recognition and delivery to plastid Clp protease system (CLPC). The protein is Clp protease adapter protein ClpF, chloroplastic of Arabidopsis thaliana (Mouse-ear cress).